The following is a 136-amino-acid chain: Alpha-2-purothionin (136 aa).

A signal peptide spans 1-27 (MGSKGLKGVMVCLLILGLVLEQVQVEG). Cystine bridges form between Cys30-Cys66, Cys31-Cys58, Cys39-Cys56, and Cys43-Cys52. Positions 73-136 (LALESNSDEP…GDAGLTSLDA (64 aa)) are cleaved as a propeptide — acidic domain.

This sequence belongs to the plant thionin (TC 1.C.44) family. 4 C-C subfamily.

It localises to the secreted. Its function is as follows. Thionins are small plant proteins which are toxic to animal cells. They seem to exert their toxic effect at the level of the cell membrane. Their precise function is not known. The protein is Alpha-2-purothionin (THI1.2) of Triticum aestivum (Wheat).